Reading from the N-terminus, the 102-residue chain is ATP-dependent Clp protease adapter protein ClpS (102 aa).

This sequence belongs to the ClpS family. Binds to the N-terminal domain of the chaperone ClpA.

Its function is as follows. Involved in the modulation of the specificity of the ClpAP-mediated ATP-dependent protein degradation. The polypeptide is ATP-dependent Clp protease adapter protein ClpS (Shewanella piezotolerans (strain WP3 / JCM 13877)).